A 212-amino-acid chain; its full sequence is Guanylate kinase (212 aa).

The region spanning 5 to 187 is the Guanylate kinase-like domain; the sequence is GILCIISAPS…ALMHLQSIML (183 aa). Residue 12-19 participates in ATP binding; that stretch reads APSGTGKS.

Belongs to the guanylate kinase family.

Its subcellular location is the cytoplasm. The enzyme catalyses GMP + ATP = GDP + ADP. Functionally, essential for recycling GMP and indirectly, cGMP. This is Guanylate kinase from Blochmanniella pennsylvanica (strain BPEN).